The sequence spans 236 residues: Ubiquinone biosynthesis O-methyltransferase (236 aa).

Residues R39, G59, D80, and M124 each contribute to the S-adenosyl-L-methionine site.

Belongs to the methyltransferase superfamily. UbiG/COQ3 family.

The enzyme catalyses a 3-demethylubiquinol + S-adenosyl-L-methionine = a ubiquinol + S-adenosyl-L-homocysteine + H(+). It carries out the reaction a 3-(all-trans-polyprenyl)benzene-1,2-diol + S-adenosyl-L-methionine = a 2-methoxy-6-(all-trans-polyprenyl)phenol + S-adenosyl-L-homocysteine + H(+). Its pathway is cofactor biosynthesis; ubiquinone biosynthesis. Its function is as follows. O-methyltransferase that catalyzes the 2 O-methylation steps in the ubiquinone biosynthetic pathway. This chain is Ubiquinone biosynthesis O-methyltransferase, found in Shewanella sp. (strain ANA-3).